The following is a 759-amino-acid chain: Tripartite motif-containing protein 46 (759 aa).

Residues 1–166 (MAEGEDMQTF…VERYRQSVSV (166 aa)) are required for proximal axon localization, axon formation and migration. An RING-type 1; degenerate zinc finger spans residues 33 to 59 (CPVCQEMYKQPLVLPCTHNVCQACARE). Positions 67–98 (IGHGGDPSSEPTSPASTPSTRSPRLSRRTLPK) are disordered. The span at 73 to 89 (PSSEPTSPASTPSTRSP) shows a compositional bias: low complexity. The RING-type 2; degenerate zinc finger occupies 172–231 (CQLCKPPPLEATKGCSECRATFCNECFKLFHPWGTQKAQHEPTLPTLSFRPKGLMCPDHK). Residues 222–263 (PKGLMCPDHKEEVTHYCKTCQRLVCQLCRVRRTHSGHKITPV) form a B box-type zinc finger. The Zn(2+) site is built by cysteine 227, histidine 230, cysteine 249, and histidine 255. Residues 294–400 (ELEETIRHTE…RATEALQTFR (107 aa)) are a coiled coil. Serine 330 bears the Phosphoserine mark. Positions 370–427 (LKETDQPCFVQAAKQLHNRIARATEALQTFRPAASSSFRHCQLDVGREMKLLTELNFL) constitute a COS domain. The tract at residues 411–429 (QLDVGREMKLLTELNFLRV) is required for microtubule association, proximal axon localization and axon formation. The Fibronectin type-III domain maps to 429–528 (VPEAPVIDTQ…EDVHLHTPPA (100 aa)). The region spanning 513–747 (GYGEYSEDVH…LQEPVGTKPE (235 aa)) is the B30.2/SPRY domain. Serine 627 carries the phosphoserine modification.

It belongs to the TRIM/RBCC family. As to quaternary structure, interacts with TUBB3 and TUBA4A. Expressed in primary hippocampal and cortical neurons.

It localises to the cell projection. The protein resides in the axon. It is found in the cytoplasm. Its subcellular location is the cytoskeleton. Functionally, microtubule-associated protein that is involved in the formation of parallel microtubule bundles linked by cross-bridges in the proximal axon. Required for the uniform orientation and maintenance of the parallel microtubule fascicles, which are important for efficient cargo delivery and trafficking in axons. Thereby also required for proper axon specification, the establishment of neuronal polarity and proper neuronal migration. This is Tripartite motif-containing protein 46 from Rattus norvegicus (Rat).